The primary structure comprises 123 residues: Small ribosomal subunit protein bS16 (123 aa).

The segment at 87–123 (AKNNPIKAKPGKRAQERAAEKAQKAADAAAAAADAAE) is disordered. Positions 99–110 (RAQERAAEKAQK) are enriched in basic and acidic residues. Residues 111–123 (AADAAAAAADAAE) show a composition bias toward low complexity.

Belongs to the bacterial ribosomal protein bS16 family.

The protein is Small ribosomal subunit protein bS16 of Rhizobium etli (strain CIAT 652).